The following is an 850-amino-acid chain: DNA mismatch repair protein MutS (850 aa).

Residue 608–615 coordinates ATP; that stretch reads GPNMGGKS.

Belongs to the DNA mismatch repair MutS family.

In terms of biological role, this protein is involved in the repair of mismatches in DNA. It is possible that it carries out the mismatch recognition step. This protein has a weak ATPase activity. The chain is DNA mismatch repair protein MutS from Thiobacillus denitrificans (strain ATCC 25259 / T1).